Consider the following 757-residue polypeptide: Probable phospholipase C20G8.02, mitochondrial (757 aa).

The transit peptide at 1–13 directs the protein to the mitochondrion; the sequence is MILYIVLPFYVRT. Residues 289–330 are disordered; sequence ESNSKPSTPVPTEELTSTTLLNDSSDPSDNFTPSNTESTIDL. Over residues 302 to 329 the composition is skewed to polar residues; sequence ELTSTTLLNDSSDPSDNFTPSNTESTID. The active site involves serine 524. In terms of domain architecture, DDHD spans 547 to 757; it reads LDFPVANFFA…LAHFILTQLL (211 aa).

Belongs to the PA-PLA1 family.

The protein localises to the mitochondrion. Probable phospholipase that hydrolyzes phosphatidic acid. This Schizosaccharomyces pombe (strain 972 / ATCC 24843) (Fission yeast) protein is Probable phospholipase C20G8.02, mitochondrial.